Reading from the N-terminus, the 357-residue chain is Peptide chain release factor 1 (357 aa).

Residue glutamine 234 is modified to N5-methylglutamine.

The protein belongs to the prokaryotic/mitochondrial release factor family. Methylated by PrmC. Methylation increases the termination efficiency of RF1.

It is found in the cytoplasm. Its function is as follows. Peptide chain release factor 1 directs the termination of translation in response to the peptide chain termination codons UAG and UAA. The chain is Peptide chain release factor 1 (prfA) from Lactococcus lactis subsp. lactis (strain IL1403) (Streptococcus lactis).